The following is a 22-amino-acid chain: Mu-conotoxin GIIIC (22 aa).

Cystine bridges form between Cys3–Cys15, Cys4–Cys20, and Cys10–Cys21. 4-hydroxyproline is present on residues Pro6, Pro7, and Pro17. The residue at position 22 (Ala22) is an Alanine amide.

Belongs to the conotoxin M superfamily. In terms of tissue distribution, expressed by the venom duct.

The protein localises to the secreted. In terms of biological role, mu-conotoxins block voltage-gated sodium channels (Nav). This toxin shows potent activity on Nav1.4/SCN4A (IC(50)=286 nM), and weak activity on mNav1.6/SCN8A. The chain is Mu-conotoxin GIIIC from Conus geographus (Geography cone).